We begin with the raw amino-acid sequence, 161 residues long: UPF0178 protein BruAb1_1955 (161 aa).

The protein belongs to the UPF0178 family.

In Brucella abortus biovar 1 (strain 9-941), this protein is UPF0178 protein BruAb1_1955.